The chain runs to 377 residues: Putative F-box only protein 10 (377 aa).

The F-box domain occupies 1–46 (MVSVNLPWELVEEILYRVPPQSLARFRTVCKQWNSLFDDNKFVNDH).

In Arabidopsis thaliana (Mouse-ear cress), this protein is Putative F-box only protein 10 (FBX10).